We begin with the raw amino-acid sequence, 285 residues long: Pantothenate synthetase (285 aa).

ATP is bound at residue 30-37 (MGNLHAGH). Catalysis depends on histidine 37, which acts as the Proton donor. Glutamine 61 is a (R)-pantoate binding site. Glutamine 61 lines the beta-alanine pocket. 149-152 (GEKD) serves as a coordination point for ATP. Glutamine 155 is a binding site for (R)-pantoate. ATP is bound at residue 186–189 (LSSR).

This sequence belongs to the pantothenate synthetase family. In terms of assembly, homodimer.

Its subcellular location is the cytoplasm. The catalysed reaction is (R)-pantoate + beta-alanine + ATP = (R)-pantothenate + AMP + diphosphate + H(+). Its pathway is cofactor biosynthesis; (R)-pantothenate biosynthesis; (R)-pantothenate from (R)-pantoate and beta-alanine: step 1/1. Its function is as follows. Catalyzes the condensation of pantoate with beta-alanine in an ATP-dependent reaction via a pantoyl-adenylate intermediate. This Ectopseudomonas mendocina (strain ymp) (Pseudomonas mendocina) protein is Pantothenate synthetase.